Consider the following 320-residue polypeptide: tRNA uridine(34) hydroxylase (320 aa).

The 95-residue stretch at 123–217 folds into the Rhodanese domain; sequence EDENTVILDA…YGKDPETKGQ (95 aa). Cysteine 177 serves as the catalytic Cysteine persulfide intermediate.

It belongs to the TrhO family.

The catalysed reaction is uridine(34) in tRNA + AH2 + O2 = 5-hydroxyuridine(34) in tRNA + A + H2O. Its function is as follows. Catalyzes oxygen-dependent 5-hydroxyuridine (ho5U) modification at position 34 in tRNAs. The protein is tRNA uridine(34) hydroxylase of Staphylococcus epidermidis (strain ATCC 12228 / FDA PCI 1200).